The primary structure comprises 477 residues: MKNLPILLLLCVAACSAYPLDRSARDEDSNMDLLQDYLEKYYDLGKEMRQYVRRKDSGPIVKKIQEMQKFLGLKVTGKLDSDTVEVMHKSRCGVPDVGHFTTFPGMPKWSKTHLTYRIVNYTQDLPRDAVDSDVEKALKIWEEVTPLTFSRIYEGEADIMITFAVREHGDFFPFDGPGKVLAHAYPPGPGMNGDAHFDDDEHWTKDASGINFLLVAAHELGHSLGLYHSTNTEALMYPLYNTLKGPARVRLSQDDVTGIQSLYGPPPASPDSPVEPSEPEPPAPGTLAMCDPALSFDAISTLRGEILFFKDRYFWRKTFRTLVPEFHPISSFWPSLPSGIDAAYEVTSRDSVFIFKGNKFWAIRGNEEQAGYPRGIHTLGFPPTVRKIDAAIFDKEKQKTYFFVEDKYWRFDEKRQSMEPGYPKQIAEDFPGIDSKLDAAFESFGFFYFFSGSSQFEFDPNAKKVTHVLKSNSWFNC.

The N-terminal stretch at 1-17 is a signal peptide; sequence MKNLPILLLLCVAACSA. Residues 18–99 constitute a propeptide, activation peptide; it reads YPLDRSARDE…SRCGVPDVGH (82 aa). The Cysteine switch motif lies at 90–97; sequence SRCGVPDV. A Zn(2+)-binding site is contributed by cysteine 92. An N-linked (GlcNAc...) asparagine glycan is attached at asparagine 120. The Ca(2+) site is built by aspartate 124 and aspartate 158. Zn(2+)-binding residues include histidine 168 and aspartate 170. Residues aspartate 175, glycine 176, glycine 178, and valine 180 each coordinate Ca(2+). Histidine 183 lines the Zn(2+) pocket. Residues glycine 190, asparagine 192, and aspartate 194 each contribute to the Ca(2+) site. Histidine 196 contacts Zn(2+). Residues aspartate 198, aspartate 199, and glutamate 201 each coordinate Ca(2+). Position 218 (histidine 218) interacts with Zn(2+). Glutamate 219 is an active-site residue. Zn(2+)-binding residues include histidine 222 and histidine 228. The interval 260 to 285 is disordered; that stretch reads QSLYGPPPASPDSPVEPSEPEPPAPG. 4 Hemopexin repeats span residues 287 to 336, 337 to 383, 385 to 433, and 434 to 477; these read LAMC…WPSL, PSGI…GFPP, VRKI…FPGI, and DSKL…WFNC. A disulfide bond links cysteine 290 and cysteine 477. Aspartate 297 serves as a coordination point for Ca(2+). Residues aspartate 389 and aspartate 438 each coordinate Ca(2+).

It belongs to the peptidase M10A family. Ca(2+) is required as a cofactor. The cofactor is Zn(2+).

It is found in the secreted. The protein resides in the extracellular space. The protein localises to the extracellular matrix. The catalysed reaction is Preferential cleavage where P1', P2' and P3' are hydrophobic residues.. Its function is as follows. Metalloproteinase with a rather broad substrate specificity that can degrade fibronectin, laminin, gelatins of type I, III, IV, and V; collagens III, IV, X, and IX, and cartilage proteoglycans. Activates different molecules including growth factors, plasminogen or other matrix metalloproteinases such as MMP9. Once released into the extracellular matrix (ECM), the inactive pro-enzyme is activated by the plasmin cascade signaling pathway. Also acts intracellularly. For example, in dopaminergic neurons, gets activated by the serine protease HTRA2 upon stress and plays a pivotal role in DA neuronal degeneration by mediating microglial activation and alpha-synuclein/SNCA cleavage. In addition, plays a role in immune response and possesses antiviral activity against various viruses. Mechanistically, translocates from the cytoplasm into the cell nucleus upon virus infection to influence NF-kappa-B activities. The sequence is that of Stromelysin-1 (MMP3) from Equus caballus (Horse).